The chain runs to 268 residues: Urease accessory protein UreD (268 aa).

The protein belongs to the UreD family. In terms of assembly, ureD, UreF and UreG form a complex that acts as a GTP-hydrolysis-dependent molecular chaperone, activating the urease apoprotein by helping to assemble the nickel containing metallocenter of UreC. The UreE protein probably delivers the nickel.

The protein localises to the cytoplasm. Functionally, required for maturation of urease via the functional incorporation of the urease nickel metallocenter. The polypeptide is Urease accessory protein UreD (Lysinibacillus sphaericus (strain C3-41)).